Consider the following 965-residue polypeptide: Meiosis-specific coiled-coil domain-containing protein MEIOC (965 aa).

2 disordered regions span residues 1-22 and 946-965; these read MEVS…EGPE and VHES…TSKH. Residues 949–965 show a composition bias toward polar residues; that stretch reads SINSSNPMNQRGETSKH.

In terms of assembly, interacts with YTHDC2; binds transcripts that regulate the mitotic cell cycle inhibiting progression into metaphase, thereby allowing meiotic prophase to proceed normally. Interacts with RBM46. As to expression, expressed specifically in fetal ovary and postnatal and adult testes (at protein level). In adult testis expressed in spermatocytes, beginning in preleptotene and extending through most stages of meiotic prophase I, including leptotene, zygotene, and pachytene.

It is found in the cytoplasm. It localises to the nucleus. Functionally, is required for meiosis completion in both male and female germ cells. Confers stability to numerous meiotic mRNAs in gonads allowing proper initiation and progression into meiosis prophase I. The function may involve YTHDC2 and is independent of induction by retinoic acid (RA). Maintains an extended meiotic prophase I by properly promoting the transition from a mitotic to a meiotic cell cycle program by binding transcripts through its interaction with YTHDC2 that regulate the mitotic cell cycle. The sequence is that of Meiosis-specific coiled-coil domain-containing protein MEIOC from Mus musculus (Mouse).